The primary structure comprises 230 residues: Fibrillarin-like rRNA/tRNA 2'-O-methyltransferase (230 aa).

S-adenosyl-L-methionine is bound by residues 87-88 (TT), 105-106 (EF), 130-131 (DA), and 150-153 (DVAQ).

Belongs to the methyltransferase superfamily. Fibrillarin family. Interacts with nop5. Component of box C/D small ribonucleoprotein (sRNP) particles that contain rpl7ae, FlpA and nop5, plus a guide RNA.

Involved in pre-rRNA and tRNA processing. Utilizes the methyl donor S-adenosyl-L-methionine to catalyze the site-specific 2'-hydroxyl methylation of ribose moieties in rRNA and tRNA. Site specificity is provided by a guide RNA that base pairs with the substrate. Methylation occurs at a characteristic distance from the sequence involved in base pairing with the guide RNA. This Methanococcus maripaludis (strain C6 / ATCC BAA-1332) protein is Fibrillarin-like rRNA/tRNA 2'-O-methyltransferase.